A 457-amino-acid polypeptide reads, in one-letter code: Siroheme synthase (457 aa).

Residues 1 to 204 are precorrin-2 dehydrogenase /sirohydrochlorin ferrochelatase; sequence MDHLPIFCQL…NDQKAITETT (204 aa). NAD(+)-binding positions include 22-23 and 43-44; these read DV and LA. S128 carries the phosphoserine modification. A uroporphyrinogen-III C-methyltransferase region spans residues 216-457; that stretch reads GEVVLVGAGP…RDKLNWFSNH (242 aa). S-adenosyl-L-methionine is bound at residue P225. The active-site Proton acceptor is the D248. The active-site Proton donor is the K270. S-adenosyl-L-methionine contacts are provided by residues 301–303, I306, 331–332, M382, and G411; these read GGD and TA.

This sequence in the N-terminal section; belongs to the precorrin-2 dehydrogenase / sirohydrochlorin ferrochelatase family. It in the C-terminal section; belongs to the precorrin methyltransferase family.

The enzyme catalyses uroporphyrinogen III + 2 S-adenosyl-L-methionine = precorrin-2 + 2 S-adenosyl-L-homocysteine + H(+). It carries out the reaction precorrin-2 + NAD(+) = sirohydrochlorin + NADH + 2 H(+). It catalyses the reaction siroheme + 2 H(+) = sirohydrochlorin + Fe(2+). The protein operates within cofactor biosynthesis; adenosylcobalamin biosynthesis; precorrin-2 from uroporphyrinogen III: step 1/1. It functions in the pathway cofactor biosynthesis; adenosylcobalamin biosynthesis; sirohydrochlorin from precorrin-2: step 1/1. It participates in porphyrin-containing compound metabolism; siroheme biosynthesis; precorrin-2 from uroporphyrinogen III: step 1/1. Its pathway is porphyrin-containing compound metabolism; siroheme biosynthesis; siroheme from sirohydrochlorin: step 1/1. The protein operates within porphyrin-containing compound metabolism; siroheme biosynthesis; sirohydrochlorin from precorrin-2: step 1/1. Functionally, multifunctional enzyme that catalyzes the SAM-dependent methylations of uroporphyrinogen III at position C-2 and C-7 to form precorrin-2 via precorrin-1. Then it catalyzes the NAD-dependent ring dehydrogenation of precorrin-2 to yield sirohydrochlorin. Finally, it catalyzes the ferrochelation of sirohydrochlorin to yield siroheme. This chain is Siroheme synthase, found in Escherichia coli O81 (strain ED1a).